A 423-amino-acid chain; its full sequence is Endochitinase 42 (423 aa).

An N-terminal signal peptide occupies residues 1 to 22 (MLSFLGKSVALLAALQATLSSP). The propeptide occupies 23–34 (KPGHRRASVEKR). In terms of domain architecture, GH18 spans 38–401 (YANSVYFTNW…GTSHRALGGL (364 aa)). Chitin is bound by residues 102–103 (GT) and 129–132 (GGWT). The Proton donor role is filled by Glu-171. A chitin-binding site is contributed by Tyr-172. An N-linked (GlcNAc...) asparagine glycan is attached at Asn-218. Chitin is bound by residues 237-240 (MAYD) and Trp-378.

The protein belongs to the glycosyl hydrolase 18 family. Chitinase class V subfamily.

The protein localises to the secreted. It carries out the reaction Random endo-hydrolysis of N-acetyl-beta-D-glucosaminide (1-&gt;4)-beta-linkages in chitin and chitodextrins.. In terms of biological role, secreted chitinase involved in the degradation of chitin, a component of the cell walls of fungi and exoskeletal elements of some animals (including worms and arthropods). Plays a morphogenetic role during apical growth, cell division and differentiation (cell wall morphogenesis). Also acts as an antifungal agent. Involved in the degradation and further assimilation of phytopathogenic fungi, namely mycoparasitism, the major mechanism accounting for the antagonistic activity against phytopathogenic fungi displayed by Trichoderma. The chain is Endochitinase 42 (chit42) from Trichoderma harzianum (Hypocrea lixii).